The following is an 863-amino-acid chain: DNA mismatch repair protein MutS (863 aa).

Position 617-624 (617-624 (GPNMGGKS)) interacts with ATP.

Belongs to the DNA mismatch repair MutS family.

Its function is as follows. This protein is involved in the repair of mismatches in DNA. It is possible that it carries out the mismatch recognition step. This protein has a weak ATPase activity. The protein is DNA mismatch repair protein MutS of Pseudomonas fluorescens (strain SBW25).